A 212-amino-acid polypeptide reads, in one-letter code: Protein-L-isoaspartate O-methyltransferase 1 (212 aa).

Residue Ser60 is part of the active site.

The protein belongs to the methyltransferase superfamily. L-isoaspartyl/D-aspartyl protein methyltransferase family.

The protein localises to the cytoplasm. It carries out the reaction [protein]-L-isoaspartate + S-adenosyl-L-methionine = [protein]-L-isoaspartate alpha-methyl ester + S-adenosyl-L-homocysteine. In terms of biological role, catalyzes the methyl esterification of L-isoaspartyl residues in peptides and proteins that result from spontaneous decomposition of normal L-aspartyl and L-asparaginyl residues. It plays a role in the repair and/or degradation of damaged proteins. The sequence is that of Protein-L-isoaspartate O-methyltransferase 1 from Anaeromyxobacter sp. (strain Fw109-5).